A 62-amino-acid chain; its full sequence is ATP synthase subunit epsilon, mitochondrial (62 aa).

The residue at position 52 (threonine 52) is a Phosphothreonine.

This sequence belongs to the eukaryotic ATPase epsilon family. As to quaternary structure, F-type ATPases have 2 components, CF(1) - the catalytic core - and CF(0) - the membrane proton channel. CF(1) has five subunits: alpha(3), beta(3), gamma(1), delta(1), epsilon(1). CF(0) has three main subunits: a, b and c.

It is found in the mitochondrion. Its subcellular location is the mitochondrion inner membrane. Mitochondrial membrane ATP synthase (F(1)F(0) ATP synthase or Complex V) produces ATP from ADP in the presence of a proton gradient across the membrane which is generated by electron transport complexes of the respiratory chain. F-type ATPases consist of two structural domains, F(1) - containing the extramembraneous catalytic core, and F(0) - containing the membrane proton channel, linked together by a central stalk and a peripheral stalk. During catalysis, ATP synthesis in the catalytic domain of F(1) is coupled via a rotary mechanism of the central stalk subunits to proton translocation. Part of the complex F(1) domain and of the central stalk which is part of the complex rotary element. Rotation of the central stalk against the surrounding alpha(3)beta(3) subunits leads to hydrolysis of ATP in three separate catalytic sites on the beta subunits. This is ATP synthase subunit epsilon, mitochondrial (ATP15) from Saccharomyces cerevisiae (strain ATCC 204508 / S288c) (Baker's yeast).